Reading from the N-terminus, the 153-residue chain is Large ribosomal subunit protein uL22 (153 aa).

It belongs to the universal ribosomal protein uL22 family. As to quaternary structure, part of the 50S ribosomal subunit.

In terms of biological role, this protein binds specifically to 23S rRNA. It makes multiple contacts with different domains of the 23S rRNA in the assembled 50S subunit and ribosome. Its function is as follows. The globular domain of the protein is located near the polypeptide exit tunnel on the outside of the subunit, while an extended beta-hairpin is found that lines the wall of the exit tunnel in the center of the 70S ribosome. The protein is Large ribosomal subunit protein uL22 of Methanococcus vannielii (strain ATCC 35089 / DSM 1224 / JCM 13029 / OCM 148 / SB).